Here is a 430-residue protein sequence, read N- to C-terminus: 3-phosphoshikimate 1-carboxyvinyltransferase (430 aa).

Lys20, Ser21, and Arg25 together coordinate 3-phosphoshikimate. Lys20 provides a ligand contact to phosphoenolpyruvate. Residues Gly90 and Arg118 each coordinate phosphoenolpyruvate. Residues Ser163, Ser164, Gln165, Ser191, Asp311, and Lys338 each coordinate 3-phosphoshikimate. Gln165 provides a ligand contact to phosphoenolpyruvate. Asp311 serves as the catalytic Proton acceptor. 2 residues coordinate phosphoenolpyruvate: Arg342 and Arg383.

Belongs to the EPSP synthase family. As to quaternary structure, monomer.

It is found in the cytoplasm. It carries out the reaction 3-phosphoshikimate + phosphoenolpyruvate = 5-O-(1-carboxyvinyl)-3-phosphoshikimate + phosphate. It functions in the pathway metabolic intermediate biosynthesis; chorismate biosynthesis. Its function is as follows. Catalyzes the transfer of the enolpyruvyl moiety of phosphoenolpyruvate (PEP) to the 5-hydroxyl of shikimate-3-phosphate (S3P) to produce enolpyruvyl shikimate-3-phosphate and inorganic phosphate. This Methanosarcina acetivorans (strain ATCC 35395 / DSM 2834 / JCM 12185 / C2A) protein is 3-phosphoshikimate 1-carboxyvinyltransferase.